The primary structure comprises 659 residues: UDP-glucuronate:xylan alpha-glucuronosyltransferase 1 (659 aa).

Residues 1 to 14 show a composition bias toward low complexity; it reads MANSPAAPAPTTTT. Residues 1–20 are disordered; that stretch reads MANSPAAPAPTTTTGGDSRR. A helical; Signal-anchor for type II membrane protein transmembrane segment spans residues 70–90; that stretch reads FQIVKLLLFILLSATLFTIIY. Positions 416 and 418 each coordinate Mn(2+). Substrate contacts are provided by residues 416–418, 445–447, 472–476, and 526–531; these read DAD, NSG, NGGDQ, and HYLGMK. His526 lines the Mn(2+) pocket.

This sequence belongs to the glycosyltransferase 8 family. Glycogenin subfamily. The cofactor is Mn(2+).

The protein localises to the golgi apparatus membrane. Functionally, glycosyltransferase required for the addition of both glucuronic acid and 4-O-methylglucuronic acid branches to xylan in stem cell walls. In association with GUX2, is responsible for almost all of the substitutions of the xylan backbone in stem glucuronoxylan. This is UDP-glucuronate:xylan alpha-glucuronosyltransferase 1 (GUX1) from Arabidopsis thaliana (Mouse-ear cress).